Consider the following 28-residue polypeptide: Alkaline serine protease NJP (28 aa).

Inhibited by PMSF. Not or very weakly inhibited by EDTA, EGTA, beta-mercaptoethanol, benzamidine, aprotinin, iodoacetic acid, pepstatin A and SBTI. Functionally, alkaline thrombin-like serine protease. Has fibrinolytic and fibrinogenolytic but not plasminogenolytic activity. Cleaves fibrinogen chains Aalpha, Bbeta and gamma chains in that order. Cleaves after Arg and Lys residues. This Hediste japonica (Polychaete worm) protein is Alkaline serine protease NJP.